Here is a 179-residue protein sequence, read N- to C-terminus: Large ribosomal subunit protein uL5 (179 aa).

It belongs to the universal ribosomal protein uL5 family. As to quaternary structure, part of the 50S ribosomal subunit; part of the 5S rRNA/L5/L18/L25 subcomplex. Contacts the 5S rRNA and the P site tRNA. Forms a bridge to the 30S subunit in the 70S ribosome.

Its function is as follows. This is one of the proteins that bind and probably mediate the attachment of the 5S RNA into the large ribosomal subunit, where it forms part of the central protuberance. In the 70S ribosome it contacts protein S13 of the 30S subunit (bridge B1b), connecting the 2 subunits; this bridge is implicated in subunit movement. Contacts the P site tRNA; the 5S rRNA and some of its associated proteins might help stabilize positioning of ribosome-bound tRNAs. The polypeptide is Large ribosomal subunit protein uL5 (Francisella tularensis subsp. mediasiatica (strain FSC147)).